A 197-amino-acid polypeptide reads, in one-letter code: Imidazoleglycerol-phosphate dehydratase (197 aa).

It belongs to the imidazoleglycerol-phosphate dehydratase family.

The protein localises to the cytoplasm. It catalyses the reaction D-erythro-1-(imidazol-4-yl)glycerol 3-phosphate = 3-(imidazol-4-yl)-2-oxopropyl phosphate + H2O. Its pathway is amino-acid biosynthesis; L-histidine biosynthesis; L-histidine from 5-phospho-alpha-D-ribose 1-diphosphate: step 6/9. In Syntrophobacter fumaroxidans (strain DSM 10017 / MPOB), this protein is Imidazoleglycerol-phosphate dehydratase.